Here is an 83-residue protein sequence, read N- to C-terminus: Exodeoxyribonuclease 7 small subunit (83 aa).

Belongs to the XseB family. Heterooligomer composed of large and small subunits.

It localises to the cytoplasm. It carries out the reaction Exonucleolytic cleavage in either 5'- to 3'- or 3'- to 5'-direction to yield nucleoside 5'-phosphates.. Its function is as follows. Bidirectionally degrades single-stranded DNA into large acid-insoluble oligonucleotides, which are then degraded further into small acid-soluble oligonucleotides. This is Exodeoxyribonuclease 7 small subunit from Rhizobium etli (strain ATCC 51251 / DSM 11541 / JCM 21823 / NBRC 15573 / CFN 42).